The primary structure comprises 328 residues: C-type lectin domain family 11 member A (328 aa).

The first 21 residues, 1–21 (MQAAWLLGALLVPHLLSFGHG), serve as a signal peptide directing secretion. A disordered region spans residues 58–111 (PTGVGNKDNLAENSEGKEVWEATETQGEEEEEETTTTPSSSPTPFPSPSPTSED). Residues 188-325 (LGHKCFLLSR…CERRLYFVCE (138 aa)) enclose the C-type lectin domain. 2 disulfides stabilise this stretch: C209–C324 and C301–C316.

O-glycosylated. Probably sulfated on the O-glycans.

The protein resides in the cytoplasm. It is found in the secreted. Functionally, promotes osteogenesis by stimulating the differentiation of mesenchymal progenitors into mature osteoblasts. Important for repair and maintenance of adult bone. In Rattus norvegicus (Rat), this protein is C-type lectin domain family 11 member A (Clec11a).